Consider the following 318-residue polypeptide: Protein-methionine-sulfoxide reductase catalytic subunit MsrP (318 aa).

Positions 1 to 40 (MKQLMMSDVTPEEIFNQRRQIIKSMGLGIATLGLPNIAFA) form a signal peptide, tat-type signal. Mo-molybdopterin is bound by residues Asn72, 75–76 (YE), Cys130, Thr165, Asn217, Arg222, and 233–235 (SIK).

The protein belongs to the MsrP family. In terms of assembly, heterodimer of a catalytic subunit (MsrP) and a heme-binding subunit (MsrQ). It depends on Mo-molybdopterin as a cofactor. Post-translationally, predicted to be exported by the Tat system. The position of the signal peptide cleavage has not been experimentally proven.

The protein resides in the periplasm. It carries out the reaction L-methionyl-[protein] + a quinone + H2O = L-methionyl-(S)-S-oxide-[protein] + a quinol. The catalysed reaction is L-methionyl-[protein] + a quinone + H2O = L-methionyl-(R)-S-oxide-[protein] + a quinol. Functionally, part of the MsrPQ system that repairs oxidized periplasmic proteins containing methionine sulfoxide residues (Met-O), using respiratory chain electrons. Thus protects these proteins from oxidative-stress damage caused by reactive species of oxygen and chlorine generated by the host defense mechanisms. MsrPQ is essential for the maintenance of envelope integrity under bleach stress, rescuing a wide series of structurally unrelated periplasmic proteins from methionine oxidation. The catalytic subunit MsrP is non-stereospecific, being able to reduce both (R-) and (S-) diastereoisomers of methionine sulfoxide. The chain is Protein-methionine-sulfoxide reductase catalytic subunit MsrP from Haemophilus ducreyi (strain 35000HP / ATCC 700724).